Consider the following 465-residue polypeptide: Cysteine--tRNA ligase (465 aa).

C30 lines the Zn(2+) pocket. The 'HIGH' region motif lies at 32–42; that stretch reads ITVYDYCHVGH. Zn(2+)-binding residues include C214, H239, and E243. The 'KMSKS' region signature appears at 271-275; it reads KMSKS. K274 lines the ATP pocket.

The protein belongs to the class-I aminoacyl-tRNA synthetase family. Monomer. The cofactor is Zn(2+).

The protein resides in the cytoplasm. It carries out the reaction tRNA(Cys) + L-cysteine + ATP = L-cysteinyl-tRNA(Cys) + AMP + diphosphate. In Burkholderia ambifaria (strain ATCC BAA-244 / DSM 16087 / CCUG 44356 / LMG 19182 / AMMD) (Burkholderia cepacia (strain AMMD)), this protein is Cysteine--tRNA ligase.